Consider the following 83-residue polypeptide: Large ribosomal subunit protein eL43 (83 aa).

Residues C38, C41, C56, and C59 each coordinate Zn(2+). The C4-type zinc finger occupies 38–59 (CPVCGRKAVKRISTGIWQCQKC).

Belongs to the eukaryotic ribosomal protein eL43 family. Putative zinc-binding subfamily. As to quaternary structure, part of the 50S ribosomal subunit. The cofactor is Zn(2+).

Functionally, binds to the 23S rRNA. The protein is Large ribosomal subunit protein eL43 of Pyrococcus furiosus (strain ATCC 43587 / DSM 3638 / JCM 8422 / Vc1).